The primary structure comprises 116 residues: Nucleoid-associated protein PMT9312_0020 (116 aa).

Belongs to the YbaB/EbfC family. As to quaternary structure, homodimer.

It localises to the cytoplasm. The protein localises to the nucleoid. Its function is as follows. Binds to DNA and alters its conformation. May be involved in regulation of gene expression, nucleoid organization and DNA protection. This Prochlorococcus marinus (strain MIT 9312) protein is Nucleoid-associated protein PMT9312_0020.